The following is a 436-amino-acid chain: MAEVKKSIPKRRFVGKKNRKENNLDGSNRDVENAALVTINSKRSAGRVATQIPEDILNDKAINEAIKLLPQNYNFEIHKTIWHIRLRKAKRVALQLPEGLLMFGCILSDIFEQFCQVETIVMGDVTYGACCIDDFTARALDCDFLVHYGHSCLIPVDQTPIKVLYVFVDIKIDLQHVVSSLKHNLPSNSRLALVGTIQFVGSLNSIKDALQIQDEDGKGGFYVVIPQAKPLSPGEALGCTSPYIEKGSVDALIYIGDGRFHLESVMIANPDLPAYRYDPYSHKLSIESYAHEEMKSIRYSAVEKARTAKKFGLIQGTLGRQGSPKVLENLKNTLRKNNKDFVCVLMSEIFPSRLGQFSDIDAWIQVACPRLSIDWGYAFPAPLLTPYEASAAFNVVPWKEVYPMDFYATNSLGNWTPNNPENRPLPNRKKTGPVSS.

A disordered region spans residues 1 to 27; it reads MAEVKKSIPKRRFVGKKNRKENNLDGS. Residues 7 to 19 show a composition bias toward basic residues; the sequence is SIPKRRFVGKKNR. Positions 130, 239, and 368 each coordinate [4Fe-4S] cluster. The disordered stretch occupies residues 417 to 436; sequence PNNPENRPLPNRKKTGPVSS. Residues 426 to 436 are compositionally biased toward basic residues; sequence PNRKKTGPVSS.

Belongs to the DPH1/DPH2 family. DPH1 subfamily. In terms of assembly, component of the 2-(3-amino-3-carboxypropyl)histidine synthase complex composed of dph1, dph2, dph3 and a NADH-dependent reductase, predominantly cbr1. [4Fe-4S] cluster serves as cofactor.

It localises to the cytoplasm. It carries out the reaction L-histidyl-[translation elongation factor 2] + S-adenosyl-L-methionine = 2-[(3S)-amino-3-carboxypropyl]-L-histidyl-[translation elongation factor 2] + S-methyl-5'-thioadenosine + H(+). It participates in protein modification; peptidyl-diphthamide biosynthesis. Catalyzes the first step of diphthamide biosynthesis, a post-translational modification of histidine which occurs in elongation factor 2. Dph1 and dph2 transfer a 3-amino-3-carboxypropyl (ACP) group from S-adenosyl-L-methionine (SAM) to a histidine residue, the reaction is assisted by a reduction system comprising dph3 and a NADH-dependent reductase, predominantly cbr1. This is 2-(3-amino-3-carboxypropyl)histidine synthase subunit 1 (dph1) from Schizosaccharomyces pombe (strain 972 / ATCC 24843) (Fission yeast).